Here is a 549-residue protein sequence, read N- to C-terminus: Chaperonin GroEL (549 aa).

ATP contacts are provided by residues 29 to 32 (TAGP), lysine 50, 86 to 90 (DGTTT), glycine 418, and aspartate 499.

Belongs to the chaperonin (HSP60) family. As to quaternary structure, forms a cylinder of 14 subunits composed of two heptameric rings stacked back-to-back. Interacts with the co-chaperonin GroES.

Its subcellular location is the cytoplasm. The catalysed reaction is ATP + H2O + a folded polypeptide = ADP + phosphate + an unfolded polypeptide.. Together with its co-chaperonin GroES, plays an essential role in assisting protein folding. The GroEL-GroES system forms a nano-cage that allows encapsulation of the non-native substrate proteins and provides a physical environment optimized to promote and accelerate protein folding. This chain is Chaperonin GroEL, found in Wolbachia sp. subsp. Drosophila simulans (strain wRi).